A 310-amino-acid polypeptide reads, in one-letter code: Integrin-binding sialoprotein (310 aa).

Positions 1–16 (MKTVLILLSILGMACA) are cleaved as a signal peptide. Residues serine 31, serine 62, serine 67, serine 75, serine 76, serine 98, and serine 106 each carry the phosphoserine modification. Residues 61-284 (QSSSDSSEEN…NGDPRGDNYR (224 aa)) form a disordered region. Residues 62 to 74 (SSSDSSEENGNGD) are compositionally biased toward low complexity. 2 stretches are compositionally biased toward acidic residues: residues 75 to 87 (SSEEEEEEEETSN) and 96 to 108 (EDSDENEDEESEA). N-linked (GlcNAc...) asparagine glycosylation occurs at asparagine 110. Threonine 144 carries the phosphothreonine modification. A compositionally biased stretch (acidic residues) spans 152 to 174 (DESDEEEEEEEEEENEAEVDDNE). Residue serine 154 is modified to Phosphoserine. Residues 175–187 (QGINGTSSNSTEV) are compositionally biased toward polar residues. 2 N-linked (GlcNAc...) asparagine glycosylation sites follow: asparagine 178 and asparagine 183. Acidic residues predominate over residues 198 to 208 (NGEEDGEEESV). Residues 209–227 (TEANTEGITVAGETTTSPN) are compositionally biased toward polar residues. The residue at position 273 (serine 273) is a Phosphoserine. The Integrin-binding motif signature appears at 279 to 281 (RGD). Serine 300 is subject to Phosphoserine. 2 positions are modified to sulfotyrosine: tyrosine 306 and tyrosine 307.

As to quaternary structure, monomer. Interacts with integrins; the interaction promotes cell adhesion.

Its subcellular location is the secreted. Its function is as follows. Binds tightly to hydroxyapatite. Appears to form an integral part of the mineralized matrix. Probably important to cell-matrix interaction. Promotes adhesion and migration of various cells via the alpha-V/beta-3 integrin receptor (ITGAV:ITGB3). The chain is Integrin-binding sialoprotein (IBSP) from Bos taurus (Bovine).